Here is a 182-residue protein sequence, read N- to C-terminus: Ribosome maturation factor RimM (182 aa).

In terms of domain architecture, PRC barrel spans 103-182; the sequence is EDDYYWKDLM…RVEVDWDPGF (80 aa).

Belongs to the RimM family. As to quaternary structure, binds ribosomal protein uS19.

The protein resides in the cytoplasm. An accessory protein needed during the final step in the assembly of 30S ribosomal subunit, possibly for assembly of the head region. Essential for efficient processing of 16S rRNA. May be needed both before and after RbfA during the maturation of 16S rRNA. It has affinity for free ribosomal 30S subunits but not for 70S ribosomes. In Yersinia pestis bv. Antiqua (strain Antiqua), this protein is Ribosome maturation factor RimM.